The sequence spans 592 residues: NADH-quinone oxidoreductase subunit C/D (592 aa).

The segment at 1–183 (MSAAQSPTAQ…DPYTLTVEGQ (183 aa)) is NADH dehydrogenase I subunit C. Residues 207–592 (DYMFLNLGPN…IDFVMADVDR (386 aa)) form an NADH dehydrogenase I subunit D region.

In the N-terminal section; belongs to the complex I 30 kDa subunit family. This sequence in the C-terminal section; belongs to the complex I 49 kDa subunit family. In terms of assembly, NDH-1 is composed of 13 different subunits. Subunits NuoB, CD, E, F, and G constitute the peripheral sector of the complex.

Its subcellular location is the cell inner membrane. It carries out the reaction a quinone + NADH + 5 H(+)(in) = a quinol + NAD(+) + 4 H(+)(out). Functionally, NDH-1 shuttles electrons from NADH, via FMN and iron-sulfur (Fe-S) centers, to quinones in the respiratory chain. The immediate electron acceptor for the enzyme in this species is believed to be ubiquinone. Couples the redox reaction to proton translocation (for every two electrons transferred, four hydrogen ions are translocated across the cytoplasmic membrane), and thus conserves the redox energy in a proton gradient. This Chromohalobacter salexigens (strain ATCC BAA-138 / DSM 3043 / CIP 106854 / NCIMB 13768 / 1H11) protein is NADH-quinone oxidoreductase subunit C/D.